The following is a 1737-amino-acid chain: Complement C4 (1737 aa).

An N-terminal signal peptide occupies residues 1 to 19; it reads MRLLWGLAWAFSFFASSLQ. Cys66 and Cys95 are disulfide-bonded. N-linked (GlcNAc...) asparagine glycans are attached at residues Asn224 and Asn664. An intrachain disulfide couples Cys633 to Cys667. Positions 674-677 are excised as a propeptide; sequence RQKR. 3 cysteine pairs are disulfide-bonded: Cys700-Cys726, Cys701-Cys733, and Cys714-Cys734. The Anaphylatoxin-like domain occupies 700–734; that stretch reads CCQDGMTKLPMARTCEQRAARVPQPACREPFLSCC. Asn743 carries N-linked (GlcNAc...) asparagine glycosylation. Positions 1005–1008 form a cross-link, isoglutamyl cysteine thioester (Cys-Gln); sequence CAEQ. 2 N-linked (GlcNAc...) asparagine glycosylation sites follow: Asn1323 and Asn1386. Sulfotyrosine is present on residues Tyr1412, Tyr1414, and Tyr1416. A propeptide spanning residues 1443–1446 is cleaved from the precursor; that stretch reads RRRR. Cystine bridges form between Cys1464-Cys1528, Cys1576-Cys1581, Cys1588-Cys1666, Cys1611-Cys1735, and Cys1711-Cys1720. Positions 1588 to 1735 constitute an NTR domain; the sequence is CPRQRRSLER…FLQEYSSQGC (148 aa). The residue at position 1676 (Tyr1676) is a Sulfotyrosine.

As to quaternary structure, in absence of complement activation, circulates in blood as a disulfide-linked trimer of an alpha, beta and gamma chain. In terms of assembly, complement C4b is composed of complement C4b-A, complement C4 beta and complement C4 gamma chains that are associated via disulfide bonds. Non-enzymatic component of the C3 convertase, also named C4bC2b, composed of the serine protease complement C2b (C2), as well as complement C4b. Non-enzymatic component of the C5 convertase, also named C4bC2bC3b, composed of the serine protease complement C2b (C2), complement C3b, as well as complement C4b. Post-translationally, prior to secretion, the single-chain precursor is enzymatically cleaved by plasminogen (PLG) to yield non-identical chains alpha, beta and gamma. During activation of the complement systems, the alpha chain is cleaved into C4a and C4b by different proteases depending on the complement pathway: C4b stays linked to the beta and gamma chains, while C4a is released in the plasma. The alpha chain is cleaved by C1S to generate C4a and C4b following activation by the classical complement system. The alpha chain is cleaved to generate C4a and C4b by MASP2 following activation by the lectin complement system. The alpha chain is cleaved by GZMK to generate C4a and C4b following activation by the GZMK complement system. Further degradation of C4b by C1 into the inactive fragments C4c and C4d blocks the generation of C3 convertase. The proteolytic cleavages often are incomplete so that many structural forms can be found in plasma. Upon activation, the internal thioester bond reacts with carbohydrate antigens on the target surface to form amide or ester bonds, leading to covalent association with the surface of pathogens. In terms of processing, complement C4b interacts with complement C3b via a thioester linkage. Post-translationally, N- and O-glycosylated. O-glycosylated with a core 1 or possibly core 8 glycan.

The protein resides in the secreted. It localises to the cell surface. Its function is as follows. Precursor of non-enzymatic components of the classical, lectin and GZMK complement pathways, which consist in a cascade of proteins that leads to phagocytosis and breakdown of pathogens and signaling that strengthens the adaptive immune system. Functionally, non-enzymatic component of C3 and C5 convertases. Generated following cleavage by complement proteases (C1S, MASP2 or GZMK, depending on the complement pathway), it covalently attaches to the surface of pathogens, where it acts as an opsonin that marks the surface of antigens for removal. It then recruits the serine protease complement C2b to form the C3 and C5 convertases, which cleave and activate C3 and C5, respectively, the next components of the complement pathways. Complement C4b-A isotype is responsible for effective binding to form amide bonds with immune aggregates or protein antigens, while complement C4b-B isotype catalyzes the transacylation of the thioester carbonyl group to form ester bonds with carbohydrate antigens. Putative humoral mediator released following cleavage by complement proteases (C1S, MASP2 or GZMK, depending on the complement pathway). While it is strongly similar to anaphylatoxins, its role is unclear. Was reported to act as a mediator of local inflammatory process; however these effects were probably due to contamination with C3a and/C5a anaphylatoxins in biological assays. The protein is Complement C4 of Rattus norvegicus (Rat).